Consider the following 186-residue polypeptide: Large ribosomal subunit protein eL15 (186 aa).

Positions 163-186 are disordered; the sequence is RGLTSAGKKGRGLNKKGKGAEKVR. Residues 170-179 are compositionally biased toward basic residues; it reads KKGRGLNKKG.

Belongs to the eukaryotic ribosomal protein eL15 family.

The sequence is that of Large ribosomal subunit protein eL15 from Methanosphaera stadtmanae (strain ATCC 43021 / DSM 3091 / JCM 11832 / MCB-3).